A 456-amino-acid polypeptide reads, in one-letter code: Enolase (456 aa).

Glutamine 169 is a (2R)-2-phosphoglycerate binding site. The active-site Proton donor is glutamate 211. Mg(2+)-binding residues include aspartate 252, glutamate 314, and aspartate 341. Residues lysine 366, arginine 395, serine 396, and lysine 417 each coordinate (2R)-2-phosphoglycerate. Residue lysine 366 is the Proton acceptor of the active site.

The protein belongs to the enolase family. The cofactor is Mg(2+).

Its subcellular location is the cytoplasm. It localises to the secreted. The protein localises to the cell surface. The enzyme catalyses (2R)-2-phosphoglycerate = phosphoenolpyruvate + H2O. Its pathway is carbohydrate degradation; glycolysis; pyruvate from D-glyceraldehyde 3-phosphate: step 4/5. Functionally, catalyzes the reversible conversion of 2-phosphoglycerate (2-PG) into phosphoenolpyruvate (PEP). It is essential for the degradation of carbohydrates via glycolysis. The protein is Enolase of Metamycoplasma arthritidis (strain 158L3-1) (Mycoplasma arthritidis).